The chain runs to 284 residues: 2-dehydro-3-deoxyphosphooctonate aldolase (284 aa).

Belongs to the KdsA family.

The protein localises to the cytoplasm. It carries out the reaction D-arabinose 5-phosphate + phosphoenolpyruvate + H2O = 3-deoxy-alpha-D-manno-2-octulosonate-8-phosphate + phosphate. It participates in carbohydrate biosynthesis; 3-deoxy-D-manno-octulosonate biosynthesis; 3-deoxy-D-manno-octulosonate from D-ribulose 5-phosphate: step 2/3. Its pathway is bacterial outer membrane biogenesis; lipopolysaccharide biosynthesis. In Bordetella petrii (strain ATCC BAA-461 / DSM 12804 / CCUG 43448), this protein is 2-dehydro-3-deoxyphosphooctonate aldolase.